The primary structure comprises 197 residues: Phospholipid hydroperoxide glutathione peroxidase (197 aa).

A Phosphoserine modification is found at S40. U73 is a catalytic residue. A non-standard amino acid (selenocysteine) is located at residue U73.

This sequence belongs to the glutathione peroxidase family. In terms of assembly, monomer. Has a tendency to form higher mass oligomers. Interacts with FUNDC1; this interaction promotes GPX4 recruitment into mitochondria through TOM/TIM complex where it is degraded by mitophagy. As to expression, expressed very intensively in the testis and weakly in lung, heart, and cerebellum.

It is found in the mitochondrion. Its subcellular location is the cytoplasm. It carries out the reaction a hydroperoxy polyunsaturated fatty acid + 2 glutathione = a hydroxy polyunsaturated fatty acid + glutathione disulfide + H2O. It catalyses the reaction 2 glutathione + H2O2 = glutathione disulfide + 2 H2O. The enzyme catalyses tert-butyl hydroperoxide + 2 glutathione = tert-butanol + glutathione disulfide + H2O. The catalysed reaction is cumene hydroperoxide + 2 glutathione = 2-phenylpropan-2-ol + glutathione disulfide + H2O. It carries out the reaction (9S)-hydroperoxy-(10E,12Z)-octadecadienoate + 2 glutathione = (9S)-hydroxy-(10E,12Z)-octadecadienoate + glutathione disulfide + H2O. It catalyses the reaction (13S)-hydroperoxy-(9Z,11E)-octadecadienoate + 2 glutathione = (13S)-hydroxy-(9Z,11E)-octadecadienoate + glutathione disulfide + H2O. The enzyme catalyses (5S)-hydroperoxy-(6E,8Z,11Z,14Z)-eicosatetraenoate + 2 glutathione = (5S)-hydroxy-(6E,8Z,11Z,14Z)-eicosatetraenoate + glutathione disulfide + H2O. The catalysed reaction is (12R)-hydroperoxy-(5Z,8Z,10E,14Z)-eicosatetraenoate + 2 glutathione = (12R)-hydroxy-(5Z,8Z,10E,14Z)-eicosatetraenoate + glutathione disulfide + H2O. It carries out the reaction (12S)-hydroperoxy-(5Z,8Z,10E,14Z)-eicosatetraenoate + 2 glutathione = (12S)-hydroxy-(5Z,8Z,10E,14Z)-eicosatetraenoate + glutathione disulfide + H2O. It catalyses the reaction (15S)-hydroperoxy-(5Z,8Z,11Z,13E)-eicosatetraenoate + 2 glutathione = (15S)-hydroxy-(5Z,8Z,11Z,13E)-eicosatetraenoate + glutathione disulfide + H2O. The enzyme catalyses (5S)-hydroperoxy-(6E,8Z,11Z,14Z,17Z)-eicosapentaenoate + 2 glutathione = (5S)-hydroxy-(6E,8Z,11Z,14Z,17Z)-eicosapentaenoate + glutathione disulfide + H2O. The catalysed reaction is (12S)-hydroperoxy-(5Z,8Z,10E,14Z,17Z)-eicosapentaenoate + 2 glutathione = (12S)-hydroxy-(5Z,8Z,10E,14Z,17Z)-eicosapentaenoate + glutathione disulfide + H2O. It carries out the reaction (15S)-hydroperoxy-(5Z,8Z,11Z,13E,17Z)-eicosapentaenoate + 2 glutathione = (15S)-hydroxy-(5Z,8Z,11Z,13E,17Z)-eicosapentaenoate + glutathione disulfide + H2O. It catalyses the reaction (15S)-hydroperoxy-(11Z,13E)-eicosadienoate + 2 glutathione = (15S)-hydroxy-(11Z,13E)-eicosadienoate + glutathione disulfide + H2O. The enzyme catalyses (17S)-hydroperoxy-(4Z,7Z,10Z,13Z,15E,19Z)-docosahexaenoate + 2 glutathione = (17S)-hydroxy-(4Z,7Z,10Z,13Z,15E,19Z)-docosahexaenoate + glutathione disulfide + H2O. The catalysed reaction is a hydroperoxy-1,2-diacyl-glycero-3-phosphocholine + 2 glutathione = a hydroxy-1,2-diacyl-glycero-3-phosphocholine + glutathione disulfide + H2O. Functionally, essential antioxidant peroxidase that directly reduces phospholipid hydroperoxide even if they are incorporated in membranes and lipoproteins. Can also reduce fatty acid hydroperoxide, cholesterol hydroperoxide and thymine hydroperoxide. Plays a key role in protecting cells from oxidative damage by preventing membrane lipid peroxidation. Required to prevent cells from ferroptosis, a non-apoptotic cell death resulting from an iron-dependent accumulation of lipid reactive oxygen species. The presence of selenocysteine (Sec) versus Cys at the active site is essential for life: it provides resistance to overoxidation and prevents cells against ferroptosis. The presence of Sec at the active site is also essential for the survival of a specific type of parvalbumin-positive interneurons, thereby preventing against fatal epileptic seizures. May be required to protect cells from the toxicity of ingested lipid hydroperoxides. Required for normal sperm development and male fertility. Essential for maturation and survival of photoreceptor cells. Plays a role in a primary T-cell response to viral and parasitic infection by protecting T-cells from ferroptosis and by supporting T-cell expansion. Plays a role of glutathione peroxidase in platelets in the arachidonic acid metabolism. Reduces hydroperoxy ester lipids formed by a 15-lipoxygenase that may play a role as down-regulator of the cellular 15-lipoxygenase pathway. Can also reduce small soluble hydroperoxides such as H2O2, cumene hydroperoxide and tert-butyl hydroperoxide. In Macaca fuscata fuscata (Japanese macaque), this protein is Phospholipid hydroperoxide glutathione peroxidase.